The primary structure comprises 448 residues: Phosphoglucosamine mutase (448 aa).

Ser100 serves as the catalytic Phosphoserine intermediate. The Mg(2+) site is built by Ser100, Asp240, Asp242, and Asp244. Ser100 is modified (phosphoserine).

It belongs to the phosphohexose mutase family. Mg(2+) is required as a cofactor. Post-translationally, activated by phosphorylation.

It carries out the reaction alpha-D-glucosamine 1-phosphate = D-glucosamine 6-phosphate. Functionally, catalyzes the conversion of glucosamine-6-phosphate to glucosamine-1-phosphate. In Bacillus anthracis (strain A0248), this protein is Phosphoglucosamine mutase.